Reading from the N-terminus, the 66-residue chain is Kappa-flavitoxin (66 aa).

5 cysteine pairs are disulfide-bonded: Cys-3–Cys-21, Cys-14–Cys-42, Cys-27–Cys-31, Cys-46–Cys-58, and Cys-59–Cys-64.

Belongs to the three-finger toxin family. Long-chain subfamily. Kappa-neurotoxin sub-subfamily. In terms of assembly, homo- and heterodimer; non-covalently linked. In terms of tissue distribution, expressed by the venom gland.

The protein localises to the secreted. Its function is as follows. Postsynaptic neurotoxin that binds and inhibits neuronal nicotinic acetylcholine receptors (nAChR) with high affinity (IC(50)&lt;100 nM). Is a selective, and slowly reversible antagonist of alpha-3/CHRNA3-containing and some alpha-4/CHRNA4-containing AChRs. This chain is Kappa-flavitoxin, found in Bungarus flaviceps flaviceps (Red-headed krait).